We begin with the raw amino-acid sequence, 318 residues long: Ubiquitin-like domain-containing CTD phosphatase 1 (318 aa).

The region spanning L3–S81 is the Ubiquitin-like domain. The FCP1 homology domain occupies P133–I294. Mg(2+)-binding residues include D143, D145, and D253.

Mg(2+) serves as cofactor.

The protein resides in the nucleus. The catalysed reaction is O-phospho-L-seryl-[protein] + H2O = L-seryl-[protein] + phosphate. It catalyses the reaction O-phospho-L-threonyl-[protein] + H2O = L-threonyl-[protein] + phosphate. In terms of biological role, dephosphorylates 26S nuclear proteasomes, thereby decreasing their proteolytic activity. Recruited to the 19S regulatory particle of the 26S proteasome where it dephosphorylates 19S component psmc2 which impairs psmc2 ATPase activity and disrupts 26S proteasome assembly. Has also been reported to stimulate the proteolytic activity of the 26S proteasome. This Xenopus tropicalis (Western clawed frog) protein is Ubiquitin-like domain-containing CTD phosphatase 1 (ublcp1).